We begin with the raw amino-acid sequence, 565 residues long: Transmembrane 7 superfamily member 3 (565 aa).

The signal sequence occupies residues 1–21 (MWRLRLLVLAVLAAGSAEAQA). N-linked (GlcNAc...) asparagine glycosylation is found at asparagine 22, asparagine 56, asparagine 70, and asparagine 259. Helical transmembrane passes span 287-307 (VSTK…CFFG), 311-331 (WKTE…YILI), 341-361 (VRLV…VASW), 364-384 (FGIL…LVSS), 402-422 (VFWV…LGCL), 427-447 (ILAC…SYMF), and 478-498 (NDYI…TLQI).

The protein resides in the cell membrane. In terms of biological role, involved in the inhibition of cytokine-induced death of pancreatic beta cells. Involved in the promotion of insulin secretion from pancreatic beta cells. Is a downstream transcriptional target of p53/TP53, and acts as a pro-survival homeostatic factor that attenuates the development of cellular stress. Maintains protein homeostasis and promotes cell survival through attenuation of endoplasmic reticulum (ER) stress and the subsequent induction of unfolded protein response (UPR). The protein is Transmembrane 7 superfamily member 3 (Tm7sf3) of Rattus norvegicus (Rat).